A 351-amino-acid polypeptide reads, in one-letter code: Protein RecA (351 aa).

67 to 74 (GPESSGKT) contributes to the ATP binding site.

This sequence belongs to the RecA family.

It is found in the cytoplasm. Can catalyze the hydrolysis of ATP in the presence of single-stranded DNA, the ATP-dependent uptake of single-stranded DNA by duplex DNA, and the ATP-dependent hybridization of homologous single-stranded DNAs. It interacts with LexA causing its activation and leading to its autocatalytic cleavage. In Mannheimia succiniciproducens (strain KCTC 0769BP / MBEL55E), this protein is Protein RecA.